The chain runs to 571 residues: Proline--tRNA ligase (571 aa).

This sequence belongs to the class-II aminoacyl-tRNA synthetase family. ProS type 1 subfamily. In terms of assembly, homodimer.

Its subcellular location is the cytoplasm. It catalyses the reaction tRNA(Pro) + L-proline + ATP = L-prolyl-tRNA(Pro) + AMP + diphosphate. Catalyzes the attachment of proline to tRNA(Pro) in a two-step reaction: proline is first activated by ATP to form Pro-AMP and then transferred to the acceptor end of tRNA(Pro). As ProRS can inadvertently accommodate and process non-cognate amino acids such as alanine and cysteine, to avoid such errors it has two additional distinct editing activities against alanine. One activity is designated as 'pretransfer' editing and involves the tRNA(Pro)-independent hydrolysis of activated Ala-AMP. The other activity is designated 'posttransfer' editing and involves deacylation of mischarged Ala-tRNA(Pro). The misacylated Cys-tRNA(Pro) is not edited by ProRS. This Proteus mirabilis (strain HI4320) protein is Proline--tRNA ligase.